The primary structure comprises 359 residues: Salicylate carboxymethyltransferase (359 aa).

Tyr18 is an S-adenosyl-L-methionine binding site. Residues Tyr18, Asn21–Gln25, and Gln25 each bind substrate. Residues Gly59, Gly59–Cys60, Gly59–Ser61, Asn65, Leu96–Leu99, Asp98, Ser129–Tyr131, and Ser146–Ser148 each bind S-adenosyl-L-methionine. Residues Tyr147–Trp151 and Trp151 contribute to the substrate site. Asn162, Asp248, Phe250, and Asn251 together coordinate Mg(2+). Tyr255 is a substrate binding site.

It belongs to the methyltransferase superfamily. SABATH family.

The enzyme catalyses salicylate + S-adenosyl-L-methionine = methyl salicylate + S-adenosyl-L-homocysteine. Its function is as follows. Catalyzes the methylation of the free carboxyl end of the plant hormone salicylic acid (SA). Converts SA to SA methyl ester (MSA). The volatile compound MSA is hypothesized to act as an airborne signal that triggers defense responses in uninfected plants. MSA is an important chemoattractant for moth pollinated flowering plants. This chain is Salicylate carboxymethyltransferase (SAMT), found in Clarkia breweri (Fairy fans).